The chain runs to 322 residues: Formimidoylglutamase (322 aa).

Mn(2+) contacts are provided by His-130, Asp-156, His-158, Asp-160, Cys-244, and Asp-246.

It belongs to the arginase family. Requires Mn(2+) as cofactor.

It catalyses the reaction N-formimidoyl-L-glutamate + H2O = formamide + L-glutamate. Its pathway is amino-acid degradation; L-histidine degradation into L-glutamate; L-glutamate from N-formimidoyl-L-glutamate (hydrolase route): step 1/1. Its function is as follows. Catalyzes the conversion of N-formimidoyl-L-glutamate to L-glutamate and formamide. The sequence is that of Formimidoylglutamase from Geobacillus thermodenitrificans (strain NG80-2).